The chain runs to 367 residues: Carbamoyl phosphate synthase small chain (367 aa).

Positions 1–182 are CPSase; sequence MKLENKKGYL…PIFHPNTGDM (182 aa). S50, G230, and G232 together coordinate L-glutamine. In terms of domain architecture, Glutamine amidotransferase type-1 spans 182–367; sequence MIVVVDCGIK…DKFRTMVTGK (186 aa). The active-site Nucleophile is the C258. Residues L259, Q262, N300, G302, and Y303 each contribute to the L-glutamine site. Catalysis depends on residues H343 and E345.

Belongs to the CarA family. In terms of assembly, composed of two chains; the small (or glutamine) chain promotes the hydrolysis of glutamine to ammonia, which is used by the large (or ammonia) chain to synthesize carbamoyl phosphate. Tetramer of heterodimers (alpha,beta)4.

It catalyses the reaction hydrogencarbonate + L-glutamine + 2 ATP + H2O = carbamoyl phosphate + L-glutamate + 2 ADP + phosphate + 2 H(+). The catalysed reaction is L-glutamine + H2O = L-glutamate + NH4(+). It participates in amino-acid biosynthesis; L-arginine biosynthesis; carbamoyl phosphate from bicarbonate: step 1/1. Its pathway is pyrimidine metabolism; UMP biosynthesis via de novo pathway; (S)-dihydroorotate from bicarbonate: step 1/3. Functionally, small subunit of the glutamine-dependent carbamoyl phosphate synthetase (CPSase). CPSase catalyzes the formation of carbamoyl phosphate from the ammonia moiety of glutamine, carbonate, and phosphate donated by ATP, constituting the first step of 2 biosynthetic pathways, one leading to arginine and/or urea and the other to pyrimidine nucleotides. The small subunit (glutamine amidotransferase) binds and cleaves glutamine to supply the large subunit with the substrate ammonia. The protein is Carbamoyl phosphate synthase small chain of Saccharolobus solfataricus (strain ATCC 35092 / DSM 1617 / JCM 11322 / P2) (Sulfolobus solfataricus).